A 328-amino-acid polypeptide reads, in one-letter code: Delta-aminolevulinic acid dehydratase (328 aa).

The Zn(2+) site is built by Cys122, Cys124, and Cys132. The active-site Schiff-base intermediate with substrate is Lys197. Residues Arg207 and Arg219 each contribute to the 5-aminolevulinate site. Glu235 serves as a coordination point for Mg(2+). Lys250 serves as the catalytic Schiff-base intermediate with substrate. Residues Ser276 and Tyr315 each contribute to the 5-aminolevulinate site.

Belongs to the ALAD family. In terms of assembly, homooctamer. It depends on Zn(2+) as a cofactor.

It catalyses the reaction 2 5-aminolevulinate = porphobilinogen + 2 H2O + H(+). It functions in the pathway porphyrin-containing compound metabolism; protoporphyrin-IX biosynthesis; coproporphyrinogen-III from 5-aminolevulinate: step 1/4. Catalyzes an early step in the biosynthesis of tetrapyrroles. Binds two molecules of 5-aminolevulinate per subunit, each at a distinct site, and catalyzes their condensation to form porphobilinogen. In Halalkalibacterium halodurans (strain ATCC BAA-125 / DSM 18197 / FERM 7344 / JCM 9153 / C-125) (Bacillus halodurans), this protein is Delta-aminolevulinic acid dehydratase (hemB).